A 484-amino-acid polypeptide reads, in one-letter code: Suppressor of fused homolog (484 aa).

Residues 1–24 (MAELRPSGAPGPTAPPAPGPTAPP) form a disordered region. The span at 12–23 (PTAPPAPGPTAP) shows a compositional bias: pro residues. A Glycyl lysine isopeptide (Lys-Gly) (interchain with G-Cter in ubiquitin) cross-link involves residue K257. Residues 279–360 (SRPPEDDEDS…SSTAIIPHEL (82 aa)) are disordered. S301 is subject to Phosphoserine. K303 bears the N6-acetyllysine mark. Residue K321 forms a Glycyl lysine isopeptide (Lys-Gly) (interchain with G-Cter in SUMO2) linkage. A compositionally biased stretch (basic and acidic residues) spans 336–347 (AHDRAPSRKDSL). Phosphoserine occurs at positions 342, 346, and 352. Residue T353 is modified to Phosphothreonine. S481 bears the Phosphoserine mark.

This sequence belongs to the SUFU family. In terms of assembly, may form homodimers. Part of a DNA-bound corepressor complex containing SAP18, GLI1 and SIN3. Part of a complex containing CTNNB1. Binds BTRC, GLI2, GLI3, SAP18 and STK36. Binds both free and DNA-bound GLI1. Interacts with KIF7. Interacts with GLI3FL and this interaction regulates the formation of either repressor or activator forms of GLI3. Its association with GLI3FL is regulated by Hh signaling and dissociation of the SUFU-GLI3 interaction requires the presence of the ciliary motor KIF3A. Interacts with ULK3; inactivating the protein kinase activity of ULK3. Interacts with RAB23. Post-translationally, polyubiquitinated at Lys-257 by the SCF(FBXL17) complex, leading to its subsequent degradation and allowing the release of GLI1 for proper hedgehog/smoothened signal transduction. Ubiquitination is impaired by phosphorylation at Ser-342, Ser-346, Ser-352 and Thr-353. In terms of processing, phosphorylation at Ser-342, Ser-346, Ser-352 and Thr-353 prevents ubiquitination by the SCF(FBXL17) complex. As to expression, ubiquitous in adult tissues. Detected in osteoblasts of the perichondrium in the developing limb of 12-week old embryos. Isoform 1 is detected in fetal brain, lung, kidney and testis. Isoform 2 is detected in fetal testis, and at much lower levels in fetal brain, lung and kidney.

It localises to the cytoplasm. It is found in the nucleus. Its function is as follows. Negative regulator in the hedgehog/smoothened signaling pathway. Down-regulates GLI1-mediated transactivation of target genes. Down-regulates GLI2-mediated transactivation of target genes. Part of a corepressor complex that acts on DNA-bound GLI1. May also act by linking GLI1 to BTRC and thereby targeting GLI1 to degradation by the proteasome. Sequesters GLI1, GLI2 and GLI3 in the cytoplasm, this effect is overcome by binding of STK36 to both SUFU and a GLI protein. Negative regulator of beta-catenin signaling. Regulates the formation of either the repressor form (GLI3R) or the activator form (GLI3A) of the full-length form of GLI3 (GLI3FL). GLI3FL is complexed with SUFU in the cytoplasm and is maintained in a neutral state. Without the Hh signal, the SUFU-GLI3 complex is recruited to cilia, leading to the efficient processing of GLI3FL into GLI3R. When Hh signaling is initiated, SUFU dissociates from GLI3FL and the latter translocates to the nucleus, where it is phosphorylated, destabilized, and converted to a transcriptional activator (GLI3A). Required for normal embryonic development. Required for the proper formation of hair follicles and the control of epidermal differentiation. This chain is Suppressor of fused homolog, found in Homo sapiens (Human).